Here is a 97-residue protein sequence, read N- to C-terminus: Apolipoprotein C-II (97 aa).

The N-terminal stretch at 1–22 (MGSRFFLALFLVILMLGNEVQG) is a signal peptide. The segment at 63 to 71 (SMDEKLRDM) is lipid binding. The segment at 75 to 97 (SSAAMSTYAGIFTDQLLTLLRGE) is lipoprotein lipase cofactor.

The protein belongs to the apolipoprotein C2 family. As to expression, adult and fetal liver, intestine and peritoneal macrophages.

It localises to the secreted. Its function is as follows. Component of chylomicrons, very low-density lipoproteins (VLDL), low-density lipoproteins (LDL), and high-density lipoproteins (HDL) in plasma. Plays an important role in lipoprotein metabolism as an activator of lipoprotein lipase. The chain is Apolipoprotein C-II (Apoc2) from Mus musculus (Mouse).